Here is a 385-residue protein sequence, read N- to C-terminus: MRVTHLSLTDFRNYGTAEVHFEAGANLFVGRNGQGKTNLVESLGYLSALGSHRVSSDQAMIRQGAELAVVRARIQHEARELLVEVQLNRGAANRAQVNRAAIKPRELPRYFSSVLFAPEDLALVRGEPGVRRRFLDQLLIQRNPRLSAVIAEYERVLKQRNTLLKSARASRFREDQLGTLDIWDDRLLTLGAELINARLDLMARLSNPLVAAYRSVAGDDHHPRLLPQLTISGAHVEDEDDDSVADMTSAFGDTTDVFRQALAGVRWKELERGLTLVGPHRDDVLFELNGLPAKGYASHGESWSFALALKLASAELLRRESVTGDPVLILDDVFAELDWARRRMLATTVAGYEQVLITAAVYEDVPAELAAHTIRIEAGAIVEPS.

ATP is bound at residue 30–37 (GRNGQGKT).

Belongs to the RecF family.

It is found in the cytoplasm. Functionally, the RecF protein is involved in DNA metabolism; it is required for DNA replication and normal SOS inducibility. RecF binds preferentially to single-stranded, linear DNA. It also seems to bind ATP. This chain is DNA replication and repair protein RecF, found in Leifsonia xyli subsp. xyli (strain CTCB07).